Reading from the N-terminus, the 131-residue chain is UPF0102 protein YraN (131 aa).

A compositionally biased stretch (polar residues) spans 1–19 (MATVPTRSGSPRQLTTKQT). The disordered stretch occupies residues 1 to 20 (MATVPTRSGSPRQLTTKQTG).

The protein belongs to the UPF0102 family.

This chain is UPF0102 protein YraN, found in Escherichia fergusonii (strain ATCC 35469 / DSM 13698 / CCUG 18766 / IAM 14443 / JCM 21226 / LMG 7866 / NBRC 102419 / NCTC 12128 / CDC 0568-73).